Here is a 155-residue protein sequence, read N- to C-terminus: 3-dehydroquinate dehydratase 1 (155 aa).

Tyrosine 28 (proton acceptor) is an active-site residue. Substrate contacts are provided by asparagine 80, histidine 86, and aspartate 93. Histidine 106 serves as the catalytic Proton donor. Substrate contacts are provided by residues 107-108 (VT) and arginine 117.

The protein belongs to the type-II 3-dehydroquinase family. As to quaternary structure, homododecamer.

The enzyme catalyses 3-dehydroquinate = 3-dehydroshikimate + H2O. It functions in the pathway metabolic intermediate biosynthesis; chorismate biosynthesis; chorismate from D-erythrose 4-phosphate and phosphoenolpyruvate: step 3/7. In terms of biological role, catalyzes a trans-dehydration via an enolate intermediate. This chain is 3-dehydroquinate dehydratase 1 (aroQ1), found in Bradyrhizobium diazoefficiens (strain JCM 10833 / BCRC 13528 / IAM 13628 / NBRC 14792 / USDA 110).